We begin with the raw amino-acid sequence, 139 residues long: Ribonuclease VapC39 (139 aa).

The PINc domain maps to 4–133 (LLDVNVLIAL…DAALADSASA (130 aa)). Mg(2+) is bound by residues aspartate 6 and aspartate 106.

It belongs to the PINc/VapC protein family. Mg(2+) serves as cofactor.

Functionally, toxic component of a type II toxin-antitoxin (TA) system. An RNase. Its toxic effect is neutralized by coexpression with cognate antitoxin VapB39. This is Ribonuclease VapC39 from Mycobacterium tuberculosis (strain CDC 1551 / Oshkosh).